The following is a 1055-amino-acid chain: Kinesin-like protein KIN-7D, mitochondrial (1055 aa).

A compositionally biased stretch (low complexity) spans 1–23; the sequence is MASSSSRTRSSRPPSPASSTSSS. The tract at residues 1–36 is disordered; the sequence is MASSSSRTRSSRPPSPASSTSSSHLSNRLIPRSNST. The transit peptide at 1 to 96 directs the protein to the mitochondrion; sequence MASSSSRTRS…PMDDTISSER (96 aa). The 318-residue stretch at 98–415 folds into the Kinesin motor domain; that stretch reads SISVTVRFRP…LKFASRAKSI (318 aa). 178–185 provides a ligand contact to ATP; that stretch reads GVTSSGKT. Coiled coils occupy residues 419 to 503, 618 to 653, and 694 to 823; these read ASRN…ILVS, PENS…GEAS, and LQEK…LAQT. Residues 826-856 form a disordered region; it reads PMNGVNRKYNDGARSGRKGRISSSRSSGDEF. Positions 880–911 form a coiled coil; the sequence is LESALAEKEFIEDEYRKKAEEAKRREEALEND. The disordered stretch occupies residues 926 to 963; it reads NGALPEPNGTDPGRELEKSQSHAVLKERQVSSAPRQPE. A compositionally biased stretch (basic and acidic residues) spans 937 to 954; that stretch reads PGRELEKSQSHAVLKERQ. Residues 1008–1043 form an RING-type zinc finger; sequence CKVCFESPTAAILLPCRHFCLCKSCSLACSECPICR.

It belongs to the TRAFAC class myosin-kinesin ATPase superfamily. Kinesin family. KIN-7 subfamily.

It is found in the mitochondrion. This Arabidopsis thaliana (Mouse-ear cress) protein is Kinesin-like protein KIN-7D, mitochondrial.